We begin with the raw amino-acid sequence, 354 residues long: Peptide chain release factor 1 (354 aa).

Glutamine 231 is subject to N5-methylglutamine. Over residues 284 to 304 (EALAKDRKEQVGSGDRSERIR) the composition is skewed to basic and acidic residues. The segment at 284–308 (EALAKDRKEQVGSGDRSERIRTYNF) is disordered.

This sequence belongs to the prokaryotic/mitochondrial release factor family. In terms of processing, methylated by PrmC. Methylation increases the termination efficiency of RF1.

It is found in the cytoplasm. Its function is as follows. Peptide chain release factor 1 directs the termination of translation in response to the peptide chain termination codons UAG and UAA. The polypeptide is Peptide chain release factor 1 (Nitratiruptor sp. (strain SB155-2)).